The chain runs to 813 residues: Phosphoribosylformylglycinamidine synthase subunit PurL (813 aa).

H56 is a catalytic residue. 2 residues coordinate ATP: Y59 and K103. Mg(2+) is bound at residue E105. Substrate contacts are provided by residues 106–109 (SHNH) and R128. H107 acts as the Proton acceptor in catalysis. Position 129 (D129) interacts with Mg(2+). Position 253 (Q253) interacts with substrate. A Mg(2+)-binding site is contributed by D281. Substrate is bound at residue 325–327 (ESQ). Positions 511 and 548 each coordinate ATP. Residue N549 participates in Mg(2+) binding. S551 is a binding site for substrate.

Belongs to the FGAMS family. As to quaternary structure, monomer. Part of the FGAM synthase complex composed of 1 PurL, 1 PurQ and 2 PurS subunits.

It localises to the cytoplasm. It catalyses the reaction N(2)-formyl-N(1)-(5-phospho-beta-D-ribosyl)glycinamide + L-glutamine + ATP + H2O = 2-formamido-N(1)-(5-O-phospho-beta-D-ribosyl)acetamidine + L-glutamate + ADP + phosphate + H(+). The protein operates within purine metabolism; IMP biosynthesis via de novo pathway; 5-amino-1-(5-phospho-D-ribosyl)imidazole from N(2)-formyl-N(1)-(5-phospho-D-ribosyl)glycinamide: step 1/2. Functionally, part of the phosphoribosylformylglycinamidine synthase complex involved in the purines biosynthetic pathway. Catalyzes the ATP-dependent conversion of formylglycinamide ribonucleotide (FGAR) and glutamine to yield formylglycinamidine ribonucleotide (FGAM) and glutamate. The FGAM synthase complex is composed of three subunits. PurQ produces an ammonia molecule by converting glutamine to glutamate. PurL transfers the ammonia molecule to FGAR to form FGAM in an ATP-dependent manner. PurS interacts with PurQ and PurL and is thought to assist in the transfer of the ammonia molecule from PurQ to PurL. The protein is Phosphoribosylformylglycinamidine synthase subunit PurL of Corynebacterium jeikeium (strain K411).